The primary structure comprises 588 residues: Sulfite reductase [NADPH] hemoprotein beta-component (588 aa).

Over residues Met-1 to Glu-10 the composition is skewed to basic and acidic residues. The segment at Met-1 to Glu-20 is disordered. Cys-443, Cys-449, Cys-488, and Cys-492 together coordinate [4Fe-4S] cluster. Siroheme is bound at residue Cys-492.

It belongs to the nitrite and sulfite reductase 4Fe-4S domain family. As to quaternary structure, alpha(8)-beta(8). The alpha component is a flavoprotein, the beta component is a hemoprotein. Siroheme is required as a cofactor. Requires [4Fe-4S] cluster as cofactor.

It carries out the reaction hydrogen sulfide + 3 NADP(+) + 3 H2O = sulfite + 3 NADPH + 4 H(+). It functions in the pathway sulfur metabolism; hydrogen sulfide biosynthesis; hydrogen sulfide from sulfite (NADPH route): step 1/1. In terms of biological role, component of the sulfite reductase complex that catalyzes the 6-electron reduction of sulfite to sulfide. This is one of several activities required for the biosynthesis of L-cysteine from sulfate. The sequence is that of Sulfite reductase [NADPH] hemoprotein beta-component from Mannheimia succiniciproducens (strain KCTC 0769BP / MBEL55E).